A 588-amino-acid polypeptide reads, in one-letter code: Intracellular maltogenic amylase (588 aa).

Asn-149, Ser-155, Gly-174, and Asp-176 together coordinate Ca(2+). Residues His-249 and Arg-325 each contribute to the substrate site. Catalysis depends on Asp-327, which acts as the Nucleophile. Glu-356 functions as the Proton donor in the catalytic mechanism. Substrate is bound by residues 422-423 (HD), Asp-467, and Arg-471.

This sequence belongs to the glycosyl hydrolase 13 family. BbmA subfamily. In terms of assembly, monomer or homodimer; in equilibrium. Requires Ca(2+) as cofactor.

The protein localises to the cytoplasm. In terms of biological role, hydrolyzes beta-cyclodextrin to maltose and glucose, soluble starch to maltose and glucose, and pullulan to panose with trace amounts of maltose and glucose. It is also able to hydrolyze acarbose. Can also exhibit a transglycosylation activity transferring glucose or maltose to another moiety of sugars by forming alpha-(1,6)- and alpha-(1,3)-glycosidic linkages upon the hydrolysis of substrate at concentrations of 5% or higher. This Bacillus subtilis protein is Intracellular maltogenic amylase (bbmA).